The primary structure comprises 151 residues: Ribosome maturation factor RimP (151 aa).

The protein belongs to the RimP family.

The protein resides in the cytoplasm. In terms of biological role, required for maturation of 30S ribosomal subunits. This is Ribosome maturation factor RimP from Caldicellulosiruptor saccharolyticus (strain ATCC 43494 / DSM 8903 / Tp8T 6331).